The chain runs to 287 residues: Festuclavine synthase II (287 aa).

It belongs to the fgaFS/easG family.

It carries out the reaction festuclavine + NAD(+) = 6,8-dimethyl-6,7-didehydroergoline + NADH + H(+). The protein operates within alkaloid biosynthesis; ergot alkaloid biosynthesis. Its function is as follows. Festuclavine synthase; part of the gene cluster that mediates the biosynthesis of isofumigaclavines, fungal ergot alkaloids. The tryptophan dimethylallyltransferase ifgA catalyzes the first step of ergot alkaloid biosynthesis by condensing dimethylallyl diphosphate (DMAP) and tryptophan to form 4-dimethylallyl-L-tryptophan. The second step is catalyzed by the methyltransferase ifgB that methylates 4-dimethylallyl-L-tryptophan in the presence of S-adenosyl-L-methionine, resulting in the formation of N-methyl-dimethylallyl-L-tryptophan. The catalase ifgD and the FAD-dependent oxidoreductase ifgC then transform N-methyl-dimethylallyl-L-tryptophan to chanoclavine-I which is further oxidized by ifgE in the presence of NAD(+), resulting in the formation of chanoclavine-I aldehyde. The chanoclavine-I aldehyde reductases ifgG and/or fgaOx3 reduce chanoclavine-I aldehyde to dihydrochanoclavine-I aldehyde that spontaneously dehydrates to form 6,8-dimethyl-6,7-didehydroergoline. The festuclavine dehydrogenases ifgF1 and/or ifgF2 then catalyze the reduction of 6,8-dimethyl-6,7-didehydroergoline to form festuclavine. Hydrolysis of festuclavine by a yet undetermined cytochrome P450 monooxygenase (called ifgH) then leads to the formation of isofumigaclavine B which is in turn acetylated by ifgI to isofumigaclavine A. Penicillium roqueforti has interestingly at least two sets of genes for the consumption of chanoclavine-I aldehyde on three different loci, the OYEs ifgG/fgaOx3 and the festuclavine synthase homologs ifgF1/ifgF2. The reason for the duplication of these genes is unclear, probably to ensure the conversion of chanoclavine-I aldehyde by differential gene expression under various environmental conditions. The chain is Festuclavine synthase II from Penicillium roqueforti (strain FM164).